A 47-amino-acid chain; its full sequence is ATCAGQDKPCKVNCDCCGERGECVCGGPCICRQGNVFIAWSKLMTCK.

Disulfide bonds link Cys3/Cys17, Cys10/Cys23, Cys14/Cys46, Cys16/Cys31, and Cys25/Cys29.

Expressed by the venom gland.

It is found in the secreted. Functionally, inhibits the inactivation of voltage-gated sodium channels (Nav). This Ancylometes sp. (South American fishing spider) protein is Delta-ctenitoxin-Asp2e.